Consider the following 210-residue polypeptide: Probable nicotinate-nucleotide adenylyltransferase (210 aa).

This sequence belongs to the NadD family.

It carries out the reaction nicotinate beta-D-ribonucleotide + ATP + H(+) = deamido-NAD(+) + diphosphate. Its pathway is cofactor biosynthesis; NAD(+) biosynthesis; deamido-NAD(+) from nicotinate D-ribonucleotide: step 1/1. In terms of biological role, catalyzes the reversible adenylation of nicotinate mononucleotide (NaMN) to nicotinic acid adenine dinucleotide (NaAD). In Streptococcus pyogenes serotype M1, this protein is Probable nicotinate-nucleotide adenylyltransferase.